Consider the following 364-residue polypeptide: tRNA 2-selenouridine synthase (364 aa).

A Rhodanese domain is found at 15–138; sequence FVNDTPLMDM…LRRFLIETID (124 aa). C98 (S-selanylcysteine intermediate) is an active-site residue.

The protein belongs to the SelU family. Monomer.

It catalyses the reaction 5-methylaminomethyl-2-thiouridine(34) in tRNA + selenophosphate + (2E)-geranyl diphosphate + H2O + H(+) = 5-methylaminomethyl-2-selenouridine(34) in tRNA + (2E)-thiogeraniol + phosphate + diphosphate. The enzyme catalyses 5-methylaminomethyl-2-thiouridine(34) in tRNA + (2E)-geranyl diphosphate = 5-methylaminomethyl-S-(2E)-geranyl-thiouridine(34) in tRNA + diphosphate. The catalysed reaction is 5-methylaminomethyl-S-(2E)-geranyl-thiouridine(34) in tRNA + selenophosphate + H(+) = 5-methylaminomethyl-2-(Se-phospho)selenouridine(34) in tRNA + (2E)-thiogeraniol. It carries out the reaction 5-methylaminomethyl-2-(Se-phospho)selenouridine(34) in tRNA + H2O = 5-methylaminomethyl-2-selenouridine(34) in tRNA + phosphate. In terms of biological role, involved in the post-transcriptional modification of the uridine at the wobble position (U34) of tRNA(Lys), tRNA(Glu) and tRNA(Gln). Catalyzes the conversion of 2-thiouridine (S2U-RNA) to 2-selenouridine (Se2U-RNA). Acts in a two-step process involving geranylation of 2-thiouridine (S2U) to S-geranyl-2-thiouridine (geS2U) and subsequent selenation of the latter derivative to 2-selenouridine (Se2U) in the tRNA chain. The protein is tRNA 2-selenouridine synthase of Photobacterium profundum (strain SS9).